The sequence spans 726 residues: Catalase-peroxidase (726 aa).

A disordered region spans residues 1–33; it reads MSTTDDTHNTLSTGKCPFHQGGHDRSAGAGTAS. The tryptophyl-tyrosyl-methioninium (Trp-Tyr) (with M-252) cross-link spans 105–226; the sequence is WHGAGTYRSI…LGATEMGLIY (122 aa). Residue histidine 106 is the Proton acceptor of the active site. The segment at residues 226 to 252 is a cross-link (tryptophyl-tyrosyl-methioninium (Tyr-Met) (with W-105)); the sequence is YVNPEGPDHSGEPLSAAAAIRATFGNM. Histidine 267 contacts heme b.

Belongs to the peroxidase family. Peroxidase/catalase subfamily. As to quaternary structure, homodimer or homotetramer. The cofactor is heme b. Post-translationally, formation of the three residue Trp-Tyr-Met cross-link is important for the catalase, but not the peroxidase activity of the enzyme.

The catalysed reaction is H2O2 + AH2 = A + 2 H2O. It catalyses the reaction 2 H2O2 = O2 + 2 H2O. In terms of biological role, bifunctional enzyme with both catalase and broad-spectrum peroxidase activity. The sequence is that of Catalase-peroxidase from Salmonella schwarzengrund (strain CVM19633).